Consider the following 255-residue polypeptide: UPF0246 protein DP0358 (255 aa).

It belongs to the UPF0246 family.

This Desulfotalea psychrophila (strain LSv54 / DSM 12343) protein is UPF0246 protein DP0358.